A 354-amino-acid polypeptide reads, in one-letter code: DNA polymerase IV (354 aa).

The UmuC domain maps to 14–198 (IIHIDMDAFF…MDIAKFHGVG (185 aa)). Residues Asp18 and Asp116 each contribute to the Mg(2+) site. The active site involves Glu117.

Belongs to the DNA polymerase type-Y family. In terms of assembly, monomer. Requires Mg(2+) as cofactor.

Its subcellular location is the cytoplasm. It carries out the reaction DNA(n) + a 2'-deoxyribonucleoside 5'-triphosphate = DNA(n+1) + diphosphate. Poorly processive, error-prone DNA polymerase involved in untargeted mutagenesis. Copies undamaged DNA at stalled replication forks, which arise in vivo from mismatched or misaligned primer ends. These misaligned primers can be extended by PolIV. Exhibits no 3'-5' exonuclease (proofreading) activity. May be involved in translesional synthesis, in conjunction with the beta clamp from PolIII. This Streptococcus gordonii (strain Challis / ATCC 35105 / BCRC 15272 / CH1 / DL1 / V288) protein is DNA polymerase IV.